An 873-amino-acid chain; its full sequence is Leucine--tRNA ligase (873 aa).

The 'HIGH' region signature appears at 48-58 (PYPSGKLHMGH). The 'KMSKS' region motif lies at 636–640 (KMSKS). An ATP-binding site is contributed by K639.

It belongs to the class-I aminoacyl-tRNA synthetase family.

Its subcellular location is the cytoplasm. The catalysed reaction is tRNA(Leu) + L-leucine + ATP = L-leucyl-tRNA(Leu) + AMP + diphosphate. The sequence is that of Leucine--tRNA ligase from Cupriavidus metallidurans (strain ATCC 43123 / DSM 2839 / NBRC 102507 / CH34) (Ralstonia metallidurans).